The following is a 100-amino-acid chain: Small ribosomal subunit protein uS14 (100 aa).

Belongs to the universal ribosomal protein uS14 family. Part of the 30S ribosomal subunit. Contacts proteins S3 and S10.

Functionally, binds 16S rRNA, required for the assembly of 30S particles and may also be responsible for determining the conformation of the 16S rRNA at the A site. This is Small ribosomal subunit protein uS14 from Prochlorococcus marinus (strain MIT 9303).